The sequence spans 610 residues: Dapper homolog 3 (610 aa).

Ser-6 carries the phosphoserine modification. Disordered stretches follow at residues 50 to 76 (PGMGGAEAEDEEDAEEDEDAAAARRAA), 102 to 179 (LESG…SVGA), and 200 to 579 (TCSS…PAGP). Residues 56–69 (EAEDEEDAEEDEDA) are compositionally biased toward acidic residues. Residues 63-87 (AEEDEDAAAARRAAAALEEQLEALP) are a coiled coil. Residues 120-138 (DPSSTGGPDSPPSTFCGDS) show a composition bias toward low complexity. Ser-165 and Ser-237 each carry phosphoserine. Arg-255 is subject to Omega-N-methylarginine. Residues 317 to 331 (PPEPAPPAAASPPSS) show a composition bias toward pro residues. Residues 344-356 (PGAPAASRGLPGR) show a composition bias toward low complexity. Ser-409 and Ser-456 each carry phosphoserine. Residues 475 to 485 (PRGPAPSPSAP) are compositionally biased toward pro residues. Over residues 524–545 (ESESSASEGESPAFSSASSDSD) the composition is skewed to low complexity. The segment covering 566–576 (GPGGAAGGGTP) has biased composition (gly residues). The short motif at 607–610 (MTTV) is the PDZ-binding element.

Belongs to the dapper family. Can form homodimers and heterodimers with DACT1 or DACT3. Interacts with CSNK1D, PKA catalytic subunit, PKC-type kinase, DVL1, DVL2, DVL3, VANGL1, VANGL2 and CTNND1. As to expression, expressed in brain and uterus.

In terms of biological role, may be involved in regulation of intracellular signaling pathways during development. Specifically thought to play a role in canonical and/or non-canonical Wnt signaling pathways through interaction with DSH (Dishevelled) family proteins. This chain is Dapper homolog 3 (Dact3), found in Mus musculus (Mouse).